A 639-amino-acid polypeptide reads, in one-letter code: CTTNBP2 N-terminal-like protein (639 aa).

Residues M87–S285 adopt a coiled-coil conformation. Residues S284 and S285 each carry the phosphoserine modification. 3 disordered regions span residues V387–S430, R463–T490, and R511–L609. Composition is skewed to low complexity over residues P405 to S430 and Q467 to S477. Residues S481, S488, S523, S527, S560, S563, and S568 each carry the phosphoserine modification. The segment covering R511–F529 has biased composition (polar residues). Phosphothreonine is present on residues T570 and T590. Residues P587–T600 are compositionally biased toward low complexity. The residue at position 592 (S592) is a Phosphoserine.

In terms of assembly, interacts with CTTN/cortactin; this interaction may redistribute CTTN to stress fibers. May form homomers. Associates with the core of STRIPAK complexes composed of PP2A catalytic and scaffolding subunits, the striatins (PP2A regulatory subunits), the striatin-associated proteins MOB4, STRIP1 and STRIP2, PDCD10 and members of the STE20 kinases, such as STK24 and STK26.

The protein localises to the cell projection. It is found in the lamellipodium. It localises to the cytoplasm. Its subcellular location is the cytoskeleton. The protein resides in the stress fiber. In terms of biological role, regulates lamellipodial actin dynamics in a CTTN-dependent manner. Associates with core striatin-interacting phosphatase and kinase (STRIPAK) complex to form CTTNBP2NL-STRIPAK complexes. STRIPAK complexes have critical roles in protein (de)phosphorylation and are regulators of multiple signaling pathways including Hippo, MAPK, nuclear receptor and cytoskeleton remodeling. Different types of STRIPAK complexes are involved in a variety of biological processes such as cell growth, differentiation, apoptosis, metabolism and immune regulation. This is CTTNBP2 N-terminal-like protein from Homo sapiens (Human).